The chain runs to 204 residues: Methylthioribulose-1-phosphate dehydratase (204 aa).

Zn(2+) contacts are provided by His94 and His96.

It belongs to the aldolase class II family. MtnB subfamily. It depends on Zn(2+) as a cofactor.

It carries out the reaction 5-(methylsulfanyl)-D-ribulose 1-phosphate = 5-methylsulfanyl-2,3-dioxopentyl phosphate + H2O. It participates in amino-acid biosynthesis; L-methionine biosynthesis via salvage pathway; L-methionine from S-methyl-5-thio-alpha-D-ribose 1-phosphate: step 2/6. Functionally, catalyzes the dehydration of methylthioribulose-1-phosphate (MTRu-1-P) into 2,3-diketo-5-methylthiopentyl-1-phosphate (DK-MTP-1-P). The polypeptide is Methylthioribulose-1-phosphate dehydratase (Citrobacter koseri (strain ATCC BAA-895 / CDC 4225-83 / SGSC4696)).